Consider the following 191-residue polypeptide: Cytochrome b-245 light chain (191 aa).

The Cytoplasmic segment spans residues 2–7 (GQIEWA). The chain crosses the membrane as a helical span at residues 8-30 (MWANEQALASGLILITGGIVATA). The Extracellular segment spans residues 31–35 (GQFTQ). A helical membrane pass occupies residues 36–53 (WYLGAYSIAAGVLVCLLE). Residues 54–69 (YPRGKRSKGSTMERCG) lie on the Cytoplasmic side of the membrane. The stretch at 70–80 (QKYLTRVVKLF) is an intramembrane region. Topologically, residues 81–86 (GPLTRN) are cytoplasmic. A helical transmembrane segment spans residues 87–104 (YYIRAFLHLGLAVPAGFL). A topological domain (extracellular) is located at residue L105. The chain crosses the membrane as a helical span at residues 106 to 126 (ATILGTACLAIASGIYLLAAI). Residues 127 to 191 (RGEQWSPIEP…NPMPVNDEVV (65 aa)) lie on the Cytoplasmic side of the membrane. Residues 134–191 (IEPKPKERPQIGGTIKQPPSNPPPRPPAEARKKLSEEAAGVPTGGPQENPMPVNDEVV) form a disordered region. T147 carries the post-translational modification Phosphothreonine. K149 is covalently cross-linked (Glycyl lysine isopeptide (Lys-Gly) (interchain with G-Cter in ubiquitin)). Position 168 is a phosphoserine (S168).

This sequence belongs to the p22phox family. In terms of assembly, component of the phagocyte NADPH oxidase core complex/cytochrome b558 complex, composed of CYBB (heavy chain (beta)) and CYBA (light chain (alpha)). Component of the phagocyte NADPH oxidase complex composed of an obligatory core heterodimer formed by the membrane proteins CYBA and CYBB and the cytosolic regulatory subunits NCF1/p47-phox, NCF2/p67-phox, NCF4/p40-phox and the small GTPase RAC1 or RAC2. Interacts with NCF1 (via SH3 domain). Interacts with SH3PXD2A. Interacts with DUOX1, DUOX2 and TPO. Interacts with NOX4; this interaction mediates superoxide generation. Interacts with calprotectin (S100A8/9). Interacts with GBP7. Interacts with NOXO1. Forms a heterodimer with NOX3 and is essential for activity and cell membrane localization of NOX3. Interacts with NOX1. Phosphorylation at Thr-147 enhances NADPH oxidase activity by promoting NCF1/p47-phox binding. Post-translationally, ubiquitinated at Lys-149 likely by RNF145.

The protein localises to the cell membrane. Its function is as follows. Subunit of NADPH oxidase complexes that is required for the NADPH oxidase activity that generates, in various cell types, superoxide from molecular oxygen utilizing NADPH as an electron donor. Subunit of the phagocyte NADPH oxidase complex that mediates the transfer of electrons from cytosolic NADPH to O2 to produce the superoxide anion (O2(-)). In the activated complex, electrons are first transferred from NADPH to flavin adenine dinucleotide (FAD) and subsequently transferred via two heme molecules to molecular oxygen, producing superoxide through an outer-sphere reaction. Activation of the NADPH oxidase complex is initiated by the assembly of cytosolic subunits of the NADPH oxidase complex with the core NADPH oxidase complex to form a complex at the plasma membrane or phagosomal membrane. This activation process is initiated by phosphorylation dependent binding of the cytosolic NCF1/p47-phox subunit to the C-terminus of CYBA/p22-phox. Aassociates with NOX3 to form a functional NADPH oxidase constitutively generating superoxide. The chain is Cytochrome b-245 light chain from Bison bison (American bison).